Here is a 160-residue protein sequence, read N- to C-terminus: Adenosine 5'-monophosphoramidase HINT3 (160 aa).

The HIT domain maps to 24 to 132 (IFCTIAKGDD…LAPYSQLYKW (109 aa)). AMP is bound by residues 50–51 (DI) and 119–121 (HLH). The Histidine triad motif motif lies at 117-121 (HLHLH). Histidine 119 (tele-AMP-histidine intermediate) is an active-site residue.

This sequence belongs to the HINT family. Forms dimers to octamers and even larger oligomer.

The protein resides in the cytoplasm. It is found in the nucleus. The catalysed reaction is adenosine 5'-phosphoramidate + H2O = AMP + NH4(+). Its function is as follows. Exhibits adenosine 5'-monophosphoramidase activity, hydrolyzing purine nucleotide phosphoramidates with a single phosphate group such as adenosine 5'monophosphoramidate (AMP-NH2) to yield AMP and NH2. Hydrolyzes lysyl-AMP (AMP-N-epsilon-(N-alpha-acetyl lysine methyl ester)) generated by lysine tRNA ligase. The sequence is that of Adenosine 5'-monophosphoramidase HINT3 (hint3) from Danio rerio (Zebrafish).